The chain runs to 94 residues: Pyrimidine/purine nucleoside phosphorylase (94 aa).

The protein belongs to the nucleoside phosphorylase PpnP family.

The catalysed reaction is a purine D-ribonucleoside + phosphate = a purine nucleobase + alpha-D-ribose 1-phosphate. The enzyme catalyses adenosine + phosphate = alpha-D-ribose 1-phosphate + adenine. It carries out the reaction cytidine + phosphate = cytosine + alpha-D-ribose 1-phosphate. It catalyses the reaction guanosine + phosphate = alpha-D-ribose 1-phosphate + guanine. The catalysed reaction is inosine + phosphate = alpha-D-ribose 1-phosphate + hypoxanthine. The enzyme catalyses thymidine + phosphate = 2-deoxy-alpha-D-ribose 1-phosphate + thymine. It carries out the reaction uridine + phosphate = alpha-D-ribose 1-phosphate + uracil. It catalyses the reaction xanthosine + phosphate = alpha-D-ribose 1-phosphate + xanthine. Functionally, catalyzes the phosphorolysis of diverse nucleosides, yielding D-ribose 1-phosphate and the respective free bases. Can use uridine, adenosine, guanosine, cytidine, thymidine, inosine and xanthosine as substrates. Also catalyzes the reverse reactions. This is Pyrimidine/purine nucleoside phosphorylase from Pectobacterium carotovorum subsp. carotovorum (strain PC1).